A 198-amino-acid polypeptide reads, in one-letter code: MRIHHPLTLAALCVVLHESLGAAQHSNNVARLEHYRIAEIEHWEKRHLRSDSRGHRHHAHHGQVIDKENNNSQEQATTGNSVETNQVPSTEPTKDKTTPMKNALFKLFREKKLKTKNAGNGHAHDDDDDSDFSDDDVPTNAPTDAPTGAPTDAPTDAPTVAPTDAPTDAPTEAPTNAPTGTDAPTDAPTDAQVVPTFD.

A signal peptide spans 1-23 (MRIHHPLTLAALCVVLHESLGAA). The short motif at 46 to 49 (RHLR) is the RxLR element. Disordered stretches follow at residues 48–101 (LRSD…TPMK) and 115–198 (TKNA…PTFD). The N-linked (GlcNAc...) asparagine glycan is linked to asparagine 70. Over residues 70–91 (NNSQEQATTGNSVETNQVPSTE) the composition is skewed to polar residues. The segment covering 126-137 (DDDDSDFSDDDV) has biased composition (acidic residues). A compositionally biased stretch (low complexity) spans 173 to 191 (APTNAPTGTDAPTDAPTDA).

Belongs to the RxLR effector family. As to quaternary structure, interacts with the effector Htp3 within the host cells.

It localises to the secreted. Its subcellular location is the host cell. In terms of biological role, effector involved in the disease saprolegniosis in salmonids and other freshwater fish, resulting in considerable economic losses in aquaculture. Within the host fish cells, Htp1 is involved in the uptake of the S.parasitica effector Htp3 at a neutral pH (pH 7.5) and its release from vesicles into host cytosol where it degrades nucleic acids. The sequence is that of RxLR effector protein Htp1 from Saprolegnia parasitica (strain CBS 223.65).